The primary structure comprises 135 residues: CTP pyrophosphohydrolase (135 aa).

In terms of domain architecture, Nudix hydrolase spans 2–127 (KMIEVVAAII…DIPLLEAFMA (126 aa)). Residues 34-39 (FAGGKV), Arg72, and Asp118 each bind substrate. The Nudix box signature appears at 37–58 (GKVEPDESQRQALVRELREELG).

This sequence belongs to the Nudix hydrolase family. In terms of assembly, monomer. Mg(2+) serves as cofactor. It depends on Mn(2+) as a cofactor.

The enzyme catalyses CTP + H2O = CMP + diphosphate + H(+). The catalysed reaction is dCTP + H2O = dCMP + diphosphate + H(+). Its function is as follows. Hydrolase with a preference for pyrimidine substrates. Has high activity with 5-methyl-dCTP, and much lower activity with CTP, dCTP, 5-hydroxy-dCTP, 2-hydroxy-dATP and 8-hydroxy-dGTP. The protein is CTP pyrophosphohydrolase (nudG) of Escherichia coli (strain K12).